A 397-amino-acid chain; its full sequence is MSETSEQMEETVQSGNEPISKSTWMGFIKNLATFTGDLSTLSAPSFILSGTSLLEYMSYWFEFPELFVTIVDFPTPKERMLAVLKWYITGLSREYASRNKNYGTEKKPLNPILGELFYGSWDSSKGKVELTAEQVSHHGPESAAHVVCKEAGITVDTHNKYRSGFSGRTVYVNQLGQLRVHLEKYNETYYITLPNISLEGLWFMAPYIELYGSTYIVSNTNYITKIDYSGRGYFRGTKNSFKATIFEKNEDPDYIVEGVWTGESKLTIPSLKSTIFFLSIPSLEATPITVKPESEMGDWESRNVWKEVSAALASGNYDIVSSKKSTIEQSQRDMRKKEEAEGAVWARRYFKWEEHDSDARNALAQAVLEVIEPGFWIYIGDTHPSLPAGEQPVKRME.

Residues Asn186 and Asn195 are each glycosylated (N-linked (GlcNAc...) asparagine).

The protein belongs to the OSBP family.

It is found in the endoplasmic reticulum. This chain is Oxysterol-binding protein homolog C354.07c, found in Schizosaccharomyces pombe (strain 972 / ATCC 24843) (Fission yeast).